A 296-amino-acid chain; its full sequence is NAD kinase (296 aa).

The active-site Proton acceptor is the D72. NAD(+) is bound by residues 72–73, 146–147, R157, K174, D176, 187–192, and Q247; these read DG, ND, and TAYALS.

The protein belongs to the NAD kinase family. A divalent metal cation serves as cofactor.

The protein resides in the cytoplasm. It carries out the reaction NAD(+) + ATP = ADP + NADP(+) + H(+). In terms of biological role, involved in the regulation of the intracellular balance of NAD and NADP, and is a key enzyme in the biosynthesis of NADP. Catalyzes specifically the phosphorylation on 2'-hydroxyl of the adenosine moiety of NAD to yield NADP. The chain is NAD kinase from Pseudomonas fluorescens (strain SBW25).